A 340-amino-acid chain; its full sequence is Ribosomal RNA large subunit methyltransferase F (340 aa).

This sequence belongs to the methyltransferase superfamily. METTL16/RlmF family.

It localises to the cytoplasm. The catalysed reaction is adenosine(1618) in 23S rRNA + S-adenosyl-L-methionine = N(6)-methyladenosine(1618) in 23S rRNA + S-adenosyl-L-homocysteine + H(+). In terms of biological role, specifically methylates the adenine in position 1618 of 23S rRNA. This Dechloromonas aromatica (strain RCB) protein is Ribosomal RNA large subunit methyltransferase F.